The chain runs to 330 residues: Phosphate acyltransferase (330 aa).

Belongs to the PlsX family. Homodimer. Probably interacts with PlsY.

It is found in the cytoplasm. The catalysed reaction is a fatty acyl-[ACP] + phosphate = an acyl phosphate + holo-[ACP]. Its pathway is lipid metabolism; phospholipid metabolism. Its function is as follows. Catalyzes the reversible formation of acyl-phosphate (acyl-PO(4)) from acyl-[acyl-carrier-protein] (acyl-ACP). This enzyme utilizes acyl-ACP as fatty acyl donor, but not acyl-CoA. The sequence is that of Phosphate acyltransferase from Carboxydothermus hydrogenoformans (strain ATCC BAA-161 / DSM 6008 / Z-2901).